The sequence spans 236 residues: 2-C-methyl-D-erythritol 4-phosphate cytidylyltransferase (236 aa).

This sequence belongs to the IspD/TarI cytidylyltransferase family. IspD subfamily. As to quaternary structure, homodimer.

It catalyses the reaction 2-C-methyl-D-erythritol 4-phosphate + CTP + H(+) = 4-CDP-2-C-methyl-D-erythritol + diphosphate. It functions in the pathway isoprenoid biosynthesis; isopentenyl diphosphate biosynthesis via DXP pathway; isopentenyl diphosphate from 1-deoxy-D-xylulose 5-phosphate: step 2/6. Catalyzes the formation of 4-diphosphocytidyl-2-C-methyl-D-erythritol from CTP and 2-C-methyl-D-erythritol 4-phosphate (MEP). This chain is 2-C-methyl-D-erythritol 4-phosphate cytidylyltransferase, found in Escherichia coli O127:H6 (strain E2348/69 / EPEC).